A 250-amino-acid chain; its full sequence is Testis-expressed protein 101 (250 aa).

Residues 1-25 form the signal peptide; sequence MGACRIQYVLLIFLLIASRWTLVQN. N-linked (GlcNAc...) asparagine glycosylation is found at Asn45, Asn110, Asn134, and Asn160. The UPAR/Ly6 domain maps to 141 to 215; that stretch reads CPTCVALGSC…VKETCSYQSF (75 aa). A lipid anchor (GPI-anchor amidated glycine) is attached at Gly224. A propeptide spans 225–250 (removed in mature form); that stretch reads ASQMPTSLWVLELLFPLLLLPLTHFP.

Interacts with VAMP3. Interacts with LY6K. Interacts with DPEP3; co-localized on the cell surface of spermatocytes, spermatids, and testicular spermatozoa, co-localized only in cytoplasmic droplets of caput and corpus epididymal sperm. Interacts with ADAM3; co-localized on sperm surface. Interacts with ADAM5. N-glycosylated; by high mannose and/or biantennary complex and/or certain types of hybrid oligosaccharides; possesses different oligosaccharides chains according to its subcellular localization in the testis. In terms of processing, sheds from membrane raft by ACE and released from the cell surface of epididymal sperm while it passes through the caput epididymis leading to disappearance of TEX101 on spermatozoa; is essential to produce fertile spermatozoa. In terms of tissue distribution, detected in testis and ovary. Expressed in spermatocytes, spermatids and testicular spermatozoa, but not in spermatogonia or interstitial cells. Expressed abundantly in testicular germ cells (TGCs) but mostly disappeared from epididymal spermatozoa.

Its subcellular location is the cell membrane. It localises to the membrane raft. It is found in the cytoplasmic vesicle. The protein localises to the secretory vesicle. The protein resides in the acrosome. Its subcellular location is the secreted. Its function is as follows. Plays a role in fertilization by controlling binding of sperm to zona pellucida and migration of spermatozoa into the oviduct probably through molecule adhesion ADAM3. May play a role in signal transduction and promote protein tyrosine phosphorylation. This chain is Testis-expressed protein 101, found in Mus musculus (Mouse).